A 143-amino-acid chain; its full sequence is Large ribosomal subunit protein uL11 (143 aa).

It belongs to the universal ribosomal protein uL11 family. In terms of assembly, part of the ribosomal stalk of the 50S ribosomal subunit. Interacts with L10 and the large rRNA to form the base of the stalk. L10 forms an elongated spine to which L12 dimers bind in a sequential fashion forming a multimeric L10(L12)X complex. One or more lysine residues are methylated.

In terms of biological role, forms part of the ribosomal stalk which helps the ribosome interact with GTP-bound translation factors. This Rhizobium etli (strain CIAT 652) protein is Large ribosomal subunit protein uL11.